Consider the following 438-residue polypeptide: Phospholipase D Y (438 aa).

A signal peptide spans Met1–Ser19. N-linked (GlcNAc...) asparagine glycosylation occurs at Asn50. The 28-residue stretch at Gly145–Ser172 folds into the PLD phosphodiesterase 1 domain. Catalysis depends on residues His150, Lys152, and Asp157. Asn223, Asn336, and Asn394 each carry an N-linked (GlcNAc...) asparagine glycan. A PLD phosphodiesterase 2 domain is found at Tyr373–Tyr399.

It belongs to the phospholipase D family.

The enzyme catalyses a 1,2-diacyl-sn-glycero-3-phosphocholine + H2O = a 1,2-diacyl-sn-glycero-3-phosphate + choline + H(+). With respect to regulation, inhibited by butan-1-ol. In terms of biological role, hydrolyzes membrane phospholipids, such as PtdCho (phosphatidylcholine), producing the free headgroup and PtdOH (phosphatidic acid; signaling molecule on its own). This Dictyostelium discoideum (Social amoeba) protein is Phospholipase D Y (pldY).